Consider the following 190-residue polypeptide: Transcription antitermination protein NusB (190 aa).

A disordered region spans residues 135-190; that stretch reads APAPESVAEEADEESSDSAAAASEPTDEGDVSDSPDSSGASDEPAAPSAEIQPTVD. Residues 141 to 150 show a composition bias toward acidic residues; it reads VAEEADEESS.

Belongs to the NusB family.

Its function is as follows. Involved in transcription antitermination. Required for transcription of ribosomal RNA (rRNA) genes. Binds specifically to the boxA antiterminator sequence of the ribosomal RNA (rrn) operons. This Bifidobacterium longum (strain DJO10A) protein is Transcription antitermination protein NusB.